Consider the following 215-residue polypeptide: Elongation factor Ts (215 aa).

An involved in Mg(2+) ion dislocation from EF-Tu region spans residues 80–83 (TDFV).

This sequence belongs to the EF-Ts family.

It localises to the cytoplasm. Associates with the EF-Tu.GDP complex and induces the exchange of GDP to GTP. It remains bound to the aminoacyl-tRNA.EF-Tu.GTP complex up to the GTP hydrolysis stage on the ribosome. The chain is Elongation factor Ts from Heliobacterium modesticaldum (strain ATCC 51547 / Ice1).